Reading from the N-terminus, the 171-residue chain is Probable deoxyuridine 5'-triphosphate nucleotidohydrolase (171 aa).

Belongs to the dCTP deaminase family. Archaeal dUTPase subfamily.

It carries out the reaction dUTP + H2O = dUMP + diphosphate + H(+). It functions in the pathway pyrimidine metabolism; dUMP biosynthesis; dUMP from dCTP (dUTP route): step 2/2. This enzyme is involved in nucleotide metabolism: it produces dUMP, the immediate precursor of thymidine nucleotides and it decreases the intracellular concentration of dUTP so that uracil cannot be incorporated into DNA. In Methanosarcina acetivorans (strain ATCC 35395 / DSM 2834 / JCM 12185 / C2A), this protein is Probable deoxyuridine 5'-triphosphate nucleotidohydrolase.